The primary structure comprises 154 residues: Small ribosomal subunit protein uS7 (154 aa).

It belongs to the universal ribosomal protein uS7 family. Part of the 30S ribosomal subunit. Contacts proteins S9 and S11.

In terms of biological role, one of the primary rRNA binding proteins, it binds directly to 16S rRNA where it nucleates assembly of the head domain of the 30S subunit. Is located at the subunit interface close to the decoding center, probably blocks exit of the E-site tRNA. The chain is Small ribosomal subunit protein uS7 from Karelsulcia muelleri (strain GWSS) (Sulcia muelleri).